Consider the following 97-residue polypeptide: Large ribosomal subunit protein bL28 (97 aa).

The tract at residues 1–20 (MSRRCELTAKGPQVGHKVSH) is disordered.

This sequence belongs to the bacterial ribosomal protein bL28 family.

This Afipia carboxidovorans (strain ATCC 49405 / DSM 1227 / KCTC 32145 / OM5) (Oligotropha carboxidovorans) protein is Large ribosomal subunit protein bL28.